Consider the following 342-residue polypeptide: Hypoxia responsive morphology factor C (342 aa).

A Bipartite nuclear localization signal motif is present at residues 46–68 (RMKIPRRKSEYSSHDRLKRARKI). The interval 151-181 (ADDAWAYNAADMDTAVKFFSEAIYKAIESSP) is RNA recognition motif (RRM)-like domain.

Belongs to the hrmA family.

The protein localises to the nucleus. Functionally, probably modulates the generation of the hypoxia-typic morphotype (called H-MORPH) with altered biofilm architecture that leads to increased host inflammation, rapid disease progression, and mortality in a murine model of invasive aspergillosis. The polypeptide is Hypoxia responsive morphology factor C (Aspergillus fumigatus (strain CBS 144.89 / FGSC A1163 / CEA10) (Neosartorya fumigata)).